The chain runs to 163 residues: 3-isopropylmalate dehydratase small subunit (163 aa).

Belongs to the LeuD family. LeuD type 2 subfamily. In terms of assembly, heterodimer of LeuC and LeuD.

It catalyses the reaction (2R,3S)-3-isopropylmalate = (2S)-2-isopropylmalate. The protein operates within amino-acid biosynthesis; L-leucine biosynthesis; L-leucine from 3-methyl-2-oxobutanoate: step 2/4. Catalyzes the isomerization between 2-isopropylmalate and 3-isopropylmalate, via the formation of 2-isopropylmaleate. The polypeptide is 3-isopropylmalate dehydratase small subunit (Endomicrobium trichonymphae).